A 282-amino-acid polypeptide reads, in one-letter code: Glutamate--LysW ligase ArgX (282 aa).

Residues K87, K127, 131–137 (GSWGRLV), and 167–178 (QEYIQYKGRDIR) contribute to the ATP site. The region spanning 91 to 277 (YSKLYREGIP…VAQKLVEYIK (187 aa)) is the ATP-grasp domain. Position 192 (R192) interacts with substrate. N202 lines the ATP pocket. 203 to 204 (VA) lines the substrate pocket. Residues D237, E250, and N252 each coordinate Mg(2+). Substrate is bound at residue 256 to 260 (EFKGF). Residues 259 to 260 (GF) carry the GF motif that is essential for ArgX substrate specificity motif.

The protein belongs to the RimK family. LysX subfamily. As to quaternary structure, homotetramer. Interacts with LysW. The cofactor is Mg(2+).

The catalysed reaction is [amino-group carrier protein]-C-terminal-L-glutamate + L-glutamate + ATP = [amino-group carrier protein]-C-terminal-gamma-(L-glutamyl)-L-glutamate + ADP + phosphate + H(+). Its pathway is amino-acid biosynthesis; L-arginine biosynthesis. In terms of biological role, catalyzes the ATP-dependent formation of a covalent bond between the amino group of glutamate and the gamma-carboxyl group of the C-terminal glutamate residue in LysW. This chain is Glutamate--LysW ligase ArgX, found in Sulfurisphaera tokodaii (strain DSM 16993 / JCM 10545 / NBRC 100140 / 7) (Sulfolobus tokodaii).